A 185-amino-acid chain; its full sequence is MPKTVLSDMKTHMEKTVAVLKAEFQKVRTGRASTAILDSVKMDYYGNPTPISQIATLAIPEPRMITITPWEAKQISVIEKAIFNANIGLTPSNDGKSIRLSLPPLTEERRREIVKDLKKMAEDNRVALRNIRRDAIDRLKKLEKDKSITEDELKKYEKEVQDNTKSFEIKIDEAMTNKEKEVMEV.

The protein belongs to the RRF family.

It localises to the cytoplasm. Responsible for the release of ribosomes from messenger RNA at the termination of protein biosynthesis. May increase the efficiency of translation by recycling ribosomes from one round of translation to another. In Pelobacter propionicus (strain DSM 2379 / NBRC 103807 / OttBd1), this protein is Ribosome-recycling factor.